The following is a 183-amino-acid chain: Probable chemoreceptor glutamine deamidase CheD (183 aa).

This sequence belongs to the CheD family.

The enzyme catalyses L-glutaminyl-[protein] + H2O = L-glutamyl-[protein] + NH4(+). Functionally, probably deamidates glutamine residues to glutamate on methyl-accepting chemotaxis receptors (MCPs), playing an important role in chemotaxis. In Zymomonas mobilis subsp. mobilis (strain ATCC 31821 / ZM4 / CP4), this protein is Probable chemoreceptor glutamine deamidase CheD.